We begin with the raw amino-acid sequence, 228 residues long: Translin (228 aa).

The interval 86–90 (RFHEH) is DNA/RNA binding. Residues 177 to 198 (LDSGFRLLNLKNDSLRKRYDGL) form a leucine-zipper region. At Lys-187 the chain carries N6-acetyllysine. Ser-190 bears the Phosphoserine mark. Lys-199 carries the post-translational modification N6-acetyllysine.

This sequence belongs to the translin family. As to quaternary structure, ring-shaped heterooctamer of six TSN and two TSNAX subunits, DNA/RNA binding occurs inside the ring.

The protein resides in the cytoplasm. It localises to the nucleus. Functionally, DNA-binding protein that specifically recognizes consensus sequences at the breakpoint junctions in chromosomal translocations, mostly involving immunoglobulin (Ig)/T-cell receptor gene segments. Seems to recognize single-stranded DNA ends generated by staggered breaks occurring at recombination hot spots. In terms of biological role, exhibits both single-stranded and double-stranded endoribonuclease activity. May act as an activator of RNA-induced silencing complex (RISC) by facilitating endonucleolytic cleavage of the siRNA passenger strand. The protein is Translin (TSN) of Pongo abelii (Sumatran orangutan).